The chain runs to 473 residues: N-lysine methyltransferase SETD6 (473 aa).

A disordered region spans residues 1-23; sequence MAAPAKRARVSGGSPLVAPCPSP. Residues S14 and S22 each carry the phosphoserine modification. An SET domain is found at 62–286; the sequence is PKVTVSRQGT…EGHEIFNTYG (225 aa). Residue K63 is modified to N6-methylated lysine; by autocatalysis. 73 to 75 contributes to the S-adenosyl-L-methionine binding site; sequence AGY. W122 contacts substrate. An N6-methylated lysine; by autocatalysis modification is found at K179. Y223 lines the S-adenosyl-L-methionine pocket. Residues S224 and Q226 each contribute to the substrate site. Residues 251 to 252 and Y297 contribute to the S-adenosyl-L-methionine site; that span reads NH. Residue K372 is modified to N6-methylated lysine; by autocatalysis.

The protein belongs to the class V-like SAM-binding methyltransferase superfamily. Histone-lysine methyltransferase family. SETD6 subfamily. Monomer, homodimer and homotrimer; these structures are stabilized in the presence of S-adenosyl-L-methionine (SAM). Post-translationally, automethylated.

Its subcellular location is the nucleus. It carries out the reaction L-lysyl-[protein] + S-adenosyl-L-methionine = N(6)-methyl-L-lysyl-[protein] + S-adenosyl-L-homocysteine + H(+). The enzyme catalyses L-lysyl(8)-[histone H2AZ] + S-adenosyl-L-methionine = N(6)-methyl-L-lysyl(8)-[histone H2AZ] + S-adenosyl-L-homocysteine + H(+). In terms of biological role, protein-lysine N-methyltransferase. Monomethylates 'Lys-310' of the RELA subunit of NF-kappa-B complex, leading to down-regulation of NF-kappa-B transcription factor activity. Monomethylates 'Lys-8' of H2AZ (H2AZK8me1). Required for the maintenance of embryonic stem cell self-renewal. Methylates PAK4. The protein is N-lysine methyltransferase SETD6 (Setd6) of Mus musculus (Mouse).